The primary structure comprises 294 residues: Transmembrane protein 178B (294 aa).

An N-terminal signal peptide occupies residues 1-23; it reads MAAGRLLLYTGLSLALCALGMLA. N-linked (GlcNAc...) asparagine glycans are attached at residues N148 and N152. 3 helical membrane passes run 172-192, 206-226, and 252-272; these read AGFM…GVLG, LLFL…VAGI, and MFCA…CTLA.

The protein belongs to the TMEM178 family.

The protein localises to the membrane. The sequence is that of Transmembrane protein 178B (TMEM178B) from Homo sapiens (Human).